The primary structure comprises 417 residues: Phosphoribosylamine--glycine ligase (417 aa).

In terms of domain architecture, ATP-grasp spans 108-307; that stretch reads KRIMDEAGVP…LSTLLFAAAT (200 aa). ATP is bound at residue 134–188; the sequence is LDEFGAPYVVKADGLAAGKGVIVTEDRAAALAHAARYLTHGSVLVEEFLDGEEVS. Residues E277 and N279 each coordinate Mg(2+).

Belongs to the GARS family. Mg(2+) serves as cofactor. Mn(2+) is required as a cofactor.

The catalysed reaction is 5-phospho-beta-D-ribosylamine + glycine + ATP = N(1)-(5-phospho-beta-D-ribosyl)glycinamide + ADP + phosphate + H(+). The protein operates within purine metabolism; IMP biosynthesis via de novo pathway; N(1)-(5-phospho-D-ribosyl)glycinamide from 5-phospho-alpha-D-ribose 1-diphosphate: step 2/2. The polypeptide is Phosphoribosylamine--glycine ligase (Leifsonia xyli subsp. xyli (strain CTCB07)).